A 413-amino-acid chain; its full sequence is MKRVNSCVKSDEHVLEELETEGERQLKSLLQHQLDTSVSIEECMSKKESFAPGTMYKPFGKEAAGTMTLSQFQTLHEKDQETASLRELGLNETEILIWKSHVSGEKKTKLRATPEAIQNRLQDIEERISERQRILCLPQRFAKSKQLTRREMEIEKSLFQGADRHSFLKALYYQDEPQKKNKGDPMNNLESFYQEMIMKKRLEEFQLMRGEPFASHSLVSATSVGDSGTAESPSLLQDKGKQAAQGKGPSLHVANVIDFSPEQCWTGPKKLTQPIEFVPEDEIQRNRLSEEEIRKIPMFSSYNPGEPNKVLYLKNLSPRVTERDLVSLFARFQEKKGPPIQFRMMTGRMRGQAFITFPNKEIAWQALHLVNGYKLHGKILVIEFGKNKKQRSNLQATSLISCATGSTTEISGS.

Residues 223–235 show a composition bias toward polar residues; it reads SVGDSGTAESPSL. The disordered stretch occupies residues 223 to 247; sequence SVGDSGTAESPSLLQDKGKQAAQGK. Ser-232 is subject to Phosphoserine. Positions 309-387 constitute an RRM domain; sequence KVLYLKNLSP…KILVIEFGKN (79 aa).

Its function is as follows. May bind RNA. The polypeptide is RNA-binding protein 41 (RBM41) (Homo sapiens (Human)).